A 556-amino-acid chain; its full sequence is Glucose-6-phosphate isomerase (556 aa).

Glutamate 363 functions as the Proton donor in the catalytic mechanism. Active-site residues include histidine 394 and lysine 522.

This sequence belongs to the GPI family.

The protein resides in the cytoplasm. It catalyses the reaction alpha-D-glucose 6-phosphate = beta-D-fructose 6-phosphate. It functions in the pathway carbohydrate biosynthesis; gluconeogenesis. The protein operates within carbohydrate degradation; glycolysis; D-glyceraldehyde 3-phosphate and glycerone phosphate from D-glucose: step 2/4. Its function is as follows. Catalyzes the reversible isomerization of glucose-6-phosphate to fructose-6-phosphate. The chain is Glucose-6-phosphate isomerase from Frankia casuarinae (strain DSM 45818 / CECT 9043 / HFP020203 / CcI3).